We begin with the raw amino-acid sequence, 278 residues long: Adenosylcobinamide-GDP ribazoletransferase (278 aa).

A run of 6 helical transmembrane segments spans residues 44 to 64 (GIGVVVGGAAAAMFALLQLLL), 69 to 89 (FTPLVAAAFSTVATVWLTGGF), 121 to 141 (AFGAMALVLALLCKVALLALL), 161 to 181 (VCAALWTGHIVSRGLPLVMIW), 204 to 224 (GGLAIAFSWCFGALALASLAL), and 227 to 247 (INLIVACGFSVLALLGLLRFF).

It belongs to the CobS family. Mg(2+) serves as cofactor.

Its subcellular location is the cell inner membrane. The catalysed reaction is alpha-ribazole + adenosylcob(III)inamide-GDP = adenosylcob(III)alamin + GMP + H(+). It catalyses the reaction alpha-ribazole 5'-phosphate + adenosylcob(III)inamide-GDP = adenosylcob(III)alamin 5'-phosphate + GMP + H(+). It participates in cofactor biosynthesis; adenosylcobalamin biosynthesis; adenosylcobalamin from cob(II)yrinate a,c-diamide: step 7/7. Functionally, joins adenosylcobinamide-GDP and alpha-ribazole to generate adenosylcobalamin (Ado-cobalamin). Also synthesizes adenosylcobalamin 5'-phosphate from adenosylcobinamide-GDP and alpha-ribazole 5'-phosphate. The protein is Adenosylcobinamide-GDP ribazoletransferase of Polaromonas naphthalenivorans (strain CJ2).